We begin with the raw amino-acid sequence, 191 residues long: COP9 signalosome complex subunit 8 (191 aa).

Residues 6-179 (MMAELDEKLL…VSLVPNEQQL (174 aa)) enclose the PCI domain.

It belongs to the CSN8 family. Component of the CSN complex, probably composed of cops1, cops2, cops3, cops4, cops5, cops6, cops7, cops8 and cops9.

It localises to the cytoplasm. Its subcellular location is the nucleus. Functionally, component of the COP9 signalosome complex (CSN), a complex involved in various cellular and developmental processes. The CSN complex is an essential regulator of the ubiquitin (Ubl) conjugation pathway by mediating the deneddylation of the cullin subunits of E3 ligase complexes, leading to modify the Ubl ligase activity. In Danio rerio (Zebrafish), this protein is COP9 signalosome complex subunit 8 (cops8).